Here is a 345-residue protein sequence, read N- to C-terminus: UDP-N-acetylenolpyruvoylglucosamine reductase (345 aa).

Positions 25–193 (LPAHCTDFVS…VGVTFLLPKA (169 aa)) constitute an FAD-binding PCMH-type domain. Residue R169 is part of the active site. S237 acts as the Proton donor in catalysis. Residue E333 is part of the active site.

This sequence belongs to the MurB family. FAD is required as a cofactor.

The protein resides in the cytoplasm. It catalyses the reaction UDP-N-acetyl-alpha-D-muramate + NADP(+) = UDP-N-acetyl-3-O-(1-carboxyvinyl)-alpha-D-glucosamine + NADPH + H(+). The protein operates within cell wall biogenesis; peptidoglycan biosynthesis. Cell wall formation. The sequence is that of UDP-N-acetylenolpyruvoylglucosamine reductase from Pseudoalteromonas atlantica (strain T6c / ATCC BAA-1087).